A 959-amino-acid polypeptide reads, in one-letter code: Glycine dehydrogenase (decarboxylating) (959 aa).

The residue at position 708 (K708) is an N6-(pyridoxal phosphate)lysine.

It belongs to the GcvP family. In terms of assembly, the glycine cleavage system is composed of four proteins: P, T, L and H. Pyridoxal 5'-phosphate serves as cofactor.

The enzyme catalyses N(6)-[(R)-lipoyl]-L-lysyl-[glycine-cleavage complex H protein] + glycine + H(+) = N(6)-[(R)-S(8)-aminomethyldihydrolipoyl]-L-lysyl-[glycine-cleavage complex H protein] + CO2. The glycine cleavage system catalyzes the degradation of glycine. The P protein binds the alpha-amino group of glycine through its pyridoxal phosphate cofactor; CO(2) is released and the remaining methylamine moiety is then transferred to the lipoamide cofactor of the H protein. In Yersinia enterocolitica serotype O:8 / biotype 1B (strain NCTC 13174 / 8081), this protein is Glycine dehydrogenase (decarboxylating).